The following is a 231-amino-acid chain: Type 3 secretion system stator protein (231 aa).

The core secretion machinery of the T3SS is composed of approximately 20 different proteins, including cytoplasmic components, a base, an export apparatus and a needle. This subunit is part of the cytosolic complex. Interacts directly with Spa47/SctN (T3SS ATPase) and Spa33/SctQ (the major sorting platform component). Homodimer in solution.

The protein resides in the cytoplasm. Its function is as follows. Component of the type III secretion system (T3SS), also called injectisome, which is used to inject bacterial effector proteins into eukaryotic host cells. Acts as a regulator of the Spa47/SctN ATPase activity. It down-regulates the ATPase activity of the oligomeric Spa47/SctN, while it up-regulates the activity of the monomeric form. Important for translocation of MxiH/SctF, the major needle component. In Shigella flexneri, this protein is Type 3 secretion system stator protein.